The sequence spans 320 residues: Replication-associated protein ORF2 (320 aa).

Residues Tyr188 and Tyr192 each act as O-(5'-phospho-DNA)-tyrosine intermediate in the active site.

This sequence belongs to the microviridae Rep protein family.

The enzyme catalyses ATP + (deoxyribonucleotide)n-3'-hydroxyl + 5'-phospho-(deoxyribonucleotide)m = (deoxyribonucleotide)n+m + AMP + diphosphate.. Its function is as follows. Plays an essential role in viral DNA replication. Binds the origin of replication and cleaves the dsDNA replicative form I (RFI) and becomes covalently bound to it via phosphotyrosine bond, generating the dsDNA replicative form II (RFII). In turn, viral DNA replication initiates at the 3'-OH of the cleavage site. After one round of rolling circle synthesis, protein ORF2 is linked to the newly synthesized ssDNA and joins the ends of the displaced strand to generate a circular single-stranded molecule ready to be packed into a virion. The protein is Replication-associated protein ORF2 of Spiroplasma virus 4 (SpV4).